A 299-amino-acid polypeptide reads, in one-letter code: MIKVKVPGTTANMGPGFDSFGMALDIYNEITVEEIESGFEMLQEGELSEIPLAENLIYTTFLNTLNKHNYKYKGFRINLSKCDVPMSRGLGSSATCIVGGIFAANSIMGNVMSFDEIIKEAVSIEGHPDNVVPAIVGGMTVSIMDKDNVIYSNVTVPDRLRAFVMIPNYKLGTEEARGVLPDSYTREECVFNISRAAMLVNVMNNGEIEKLRLCMQDKIHQKYRGALIRNIDDIFKKAYEFGSLAEFISGSGSTLIAFIDKDNNEFYDRMKNFLDTLEDEWTVHLLKPNFTGAEIIKNR.

ATP is bound at residue 85–95 (PMSRGLGSSAT).

It belongs to the GHMP kinase family. Homoserine kinase subfamily.

The protein resides in the cytoplasm. The enzyme catalyses L-homoserine + ATP = O-phospho-L-homoserine + ADP + H(+). Its pathway is amino-acid biosynthesis; L-threonine biosynthesis; L-threonine from L-aspartate: step 4/5. Functionally, catalyzes the ATP-dependent phosphorylation of L-homoserine to L-homoserine phosphate. The chain is Homoserine kinase from Clostridium novyi (strain NT).